Reading from the N-terminus, the 429-residue chain is Keratin, type I cytoskeletal 18 (429 aa).

Positions 2 to 78 (SYSRSVYSSS…NVNLIGGGQN (77 aa)) are head. Residues 79–114 (EKETMQDLNDRLASYLERVRSLEAANKKLEVQIRQH) form a coil 1A region. Residues 79-389 (EKETMQDLND…RLLEGDGSFD (311 aa)) enclose the IF rod domain. Residues 115 to 130 (TEKKGPSKDWSPYYKT) form a linker 1 region. The tract at residues 131 to 222 (IEDLRKQVFD…KNHQDDVTEL (92 aa)) is coil 1B. The segment at 223-246 (QAQVARSAVTVEVDAPKSQDLGKI) is linker 12. Positions 247–385 (MTELRAQYDG…HTYRRLLEGD (139 aa)) are coil 2. Residues 386–429 (GSFDLQDAVPTVTTQTVKKVITTTQRIVDGKVVSESNDTEVLKS) are tail.

Belongs to the intermediate filament family. As to quaternary structure, heterotetramer of two type I and two type II keratins. Keratin-18 associates with keratin-8. Phosphorylated. Post-translationally, proteolytically cleaved by caspases during epithelial cell apoptosis.

Functionally, when phosphorylated, plays a role in filament reorganization. The protein is Keratin, type I cytoskeletal 18 of Xenopus tropicalis (Western clawed frog).